The chain runs to 76 residues: Alpha/kappa-conotoxin-like fe14.1 (76 aa).

Residues 1 to 24 (MPSVRSVTCCCLLWMMLSVQLVTP) form the signal peptide. Positions 25-39 (GSPGTAQLSGHRTAR) are excised as a propeptide. Disulfide bonds link C46-C61 and C50-C63. At R64 the chain carries Arginine amide. Residues 65-76 (GKRDVVSSSMAV) constitute a propeptide that is removed on maturation.

Belongs to the conotoxin J superfamily. As to expression, expressed by the venom duct.

It is found in the secreted. Its function is as follows. Highly inhibits both nicotinic acetylcholine receptors (neuronal (alpha-3/beta-4) and muscular (alpha-1/beta-1/epsilon/delta) subtypes) and the voltage-gated potassium channel Kv1.6/KCNA6 subtype. The sequence is that of Alpha/kappa-conotoxin-like fe14.1 from Conus ferrugineus (Cone snail).